Consider the following 451-residue polypeptide: Probable D-serine dehydratase (451 aa).

Lys119 is subject to N6-(pyridoxal phosphate)lysine.

This sequence belongs to the serine/threonine dehydratase family. DsdA subfamily. The cofactor is pyridoxal 5'-phosphate.

It catalyses the reaction D-serine = pyruvate + NH4(+). This Acidovorax ebreus (strain TPSY) (Diaphorobacter sp. (strain TPSY)) protein is Probable D-serine dehydratase.